The sequence spans 266 residues: Protein crossbronx-like (266 aa).

The UBC core domain maps to 15–178 (KQGYHILAEY…VQEQAILSRN (164 aa)). A disordered region spans residues 226 to 266 (SEYLGHIDSSRQMDEEETNQLEKLHRGRIPEPQREEAEVSL). Over residues 245 to 266 (QLEKLHRGRIPEPQREEAEVSL) the composition is skewed to basic and acidic residues.

This sequence belongs to the ubiquitin-conjugating enzyme family. FTS subfamily.

This Drosophila sechellia (Fruit fly) protein is Protein crossbronx-like.